Here is a 188-residue protein sequence, read N- to C-terminus: Large ribosomal subunit protein eL18 (188 aa).

Residue lysine 119 forms a Glycyl lysine isopeptide (Lys-Gly) (interchain with G-Cter in SUMO2) linkage. At serine 130 the chain carries Phosphoserine. A disordered region spans residues 150–188 (RHFGKAPGTPHSHTKPYVRSKGRKFERARGRRASRGYKN). Phosphothreonine is present on threonine 158. Composition is skewed to basic residues over residues 161-171 (SHTKPYVRSKG) and 178-188 (RGRRASRGYKN). A Glycyl lysine isopeptide (Lys-Gly) (interchain with G-Cter in SUMO2) cross-link involves residue lysine 164.

It belongs to the eukaryotic ribosomal protein eL18 family. In terms of assembly, component of the large ribosomal subunit.

The protein localises to the cytoplasm. The protein resides in the cytosol. It is found in the rough endoplasmic reticulum. Functionally, component of the large ribosomal subunit. The ribosome is a large ribonucleoprotein complex responsible for the synthesis of proteins in the cell. The sequence is that of Large ribosomal subunit protein eL18 (Rpl18) from Mus musculus (Mouse).